Here is a 678-residue protein sequence, read N- to C-terminus: Protein CASP (678 aa).

Topologically, residues 1 to 619 (MAANVGSMFQ…LVLSNKMART (619 aa)) are cytoplasmic. Coiled-coil stretches lie at residues 67–450 (LLKS…QDLS) and 502–556 (LSII…FLQS). Ser-586 carries the post-translational modification Phosphoserine. Residues 620 to 640 (IGFFYTLFLHCLVFLVLYKLA) form a helical; Anchor for type IV membrane protein membrane-spanning segment. The Lumenal portion of the chain corresponds to 641-678 (WSESMERDCATFCAKKFADHLHKFHENDNGAAAGDLWQ).

This sequence belongs to the CASP family. In terms of assembly, homodimer; disulfide-linked. Interacts with GOLGA5.

It is found in the golgi apparatus membrane. In terms of biological role, may be involved in intra-Golgi retrograde transport. The sequence is that of Protein CASP (CUTL1) from Pongo abelii (Sumatran orangutan).